We begin with the raw amino-acid sequence, 259 residues long: Leucine-rich repeat-containing protein 3B (259 aa).

Positions 1 to 33 are cleaved as a signal peptide; sequence MNLVDLWLTRSLSMCLLLQSFVLMILCFHSASM. In terms of domain architecture, LRRNT spans 34 to 64; it reads CPKGCLCSSSGGLNVTCSNANLKEIPRDLPP. A glycan (N-linked (GlcNAc...) asparagine) is linked at Asn-47. LRR repeat units lie at residues 65–86, 89–110, and 114–135; these read ETVL…IFKD, QLRV…AFKG, and TLQT…AFNN. N-linked (GlcNAc...) asparagine glycosylation occurs at Asn-94. The LRRCT domain maps to 145 to 197; it reads NPWHCDCTLQQVLRSMASNHETAHNVICKTSVLDEHAGRPFLNAANDADLCNL. The helical transmembrane segment at 205 to 225 threads the bilayer; the sequence is AMLVTMFGWFTMVISYVVYYV.

It belongs to the LRRC3 family.

The protein localises to the membrane. This Homo sapiens (Human) protein is Leucine-rich repeat-containing protein 3B (LRRC3B).